Reading from the N-terminus, the 337-residue chain is Probable cytosolic iron-sulfur protein assembly protein 1 (337 aa).

WD repeat units follow at residues leucine 11–leucine 50, valine 57–glycine 96, glycine 109–glutamate 148, glutamate 155–alanine 194, glycine 199–glutamine 240, alanine 252–serine 290, and alanine 301–aspartate 337.

The protein belongs to the WD repeat CIA1 family. In terms of assembly, interacts with NAR1.

It is found in the cytoplasm. It localises to the nucleus. Its function is as follows. Essential component of the cytosolic iron-sulfur (Fe/S) protein assembly machinery. Required for the maturation of extramitochondrial Fe/S proteins. The polypeptide is Probable cytosolic iron-sulfur protein assembly protein 1 (Candida glabrata (strain ATCC 2001 / BCRC 20586 / JCM 3761 / NBRC 0622 / NRRL Y-65 / CBS 138) (Yeast)).